The chain runs to 513 residues: ATP synthase subunit alpha (513 aa).

169 to 176 (GDRQTGKT) is an ATP binding site.

This sequence belongs to the ATPase alpha/beta chains family. F-type ATPases have 2 components, CF(1) - the catalytic core - and CF(0) - the membrane proton channel. CF(1) has five subunits: alpha(3), beta(3), gamma(1), delta(1), epsilon(1). CF(0) has three main subunits: a(1), b(2) and c(9-12). The alpha and beta chains form an alternating ring which encloses part of the gamma chain. CF(1) is attached to CF(0) by a central stalk formed by the gamma and epsilon chains, while a peripheral stalk is formed by the delta and b chains.

It localises to the cell inner membrane. It carries out the reaction ATP + H2O + 4 H(+)(in) = ADP + phosphate + 5 H(+)(out). In terms of biological role, produces ATP from ADP in the presence of a proton gradient across the membrane. The alpha chain is a regulatory subunit. The sequence is that of ATP synthase subunit alpha from Vesicomyosocius okutanii subsp. Calyptogena okutanii (strain HA).